A 419-amino-acid polypeptide reads, in one-letter code: L-rhamnose isomerase (419 aa).

Residues H262, D294, and D296 each coordinate Mn(2+).

It belongs to the rhamnose isomerase family. Homotetramer. The cofactor is Mn(2+).

Its subcellular location is the cytoplasm. The enzyme catalyses L-rhamnopyranose = L-rhamnulose. Its pathway is carbohydrate degradation; L-rhamnose degradation; glycerone phosphate from L-rhamnose: step 1/3. Its function is as follows. Catalyzes the interconversion of L-rhamnose and L-rhamnulose. The sequence is that of L-rhamnose isomerase from Escherichia coli (strain 55989 / EAEC).